We begin with the raw amino-acid sequence, 336 residues long: Lipoyl synthase (336 aa).

[4Fe-4S] cluster is bound by residues Cys-81, Cys-86, Cys-92, Cys-107, Cys-111, Cys-114, and Ser-323. The region spanning 93–312 is the Radical SAM core domain; it reads FGHGTATFMI…EDYGYELGFS (220 aa).

It belongs to the radical SAM superfamily. Lipoyl synthase family. It depends on [4Fe-4S] cluster as a cofactor.

It localises to the cytoplasm. It carries out the reaction [[Fe-S] cluster scaffold protein carrying a second [4Fe-4S](2+) cluster] + N(6)-octanoyl-L-lysyl-[protein] + 2 oxidized [2Fe-2S]-[ferredoxin] + 2 S-adenosyl-L-methionine + 4 H(+) = [[Fe-S] cluster scaffold protein] + N(6)-[(R)-dihydrolipoyl]-L-lysyl-[protein] + 4 Fe(3+) + 2 hydrogen sulfide + 2 5'-deoxyadenosine + 2 L-methionine + 2 reduced [2Fe-2S]-[ferredoxin]. The protein operates within protein modification; protein lipoylation via endogenous pathway; protein N(6)-(lipoyl)lysine from octanoyl-[acyl-carrier-protein]: step 2/2. Functionally, catalyzes the radical-mediated insertion of two sulfur atoms into the C-6 and C-8 positions of the octanoyl moiety bound to the lipoyl domains of lipoate-dependent enzymes, thereby converting the octanoylated domains into lipoylated derivatives. The polypeptide is Lipoyl synthase (Stenotrophomonas maltophilia (strain R551-3)).